The sequence spans 115 residues: NADH-ubiquinone oxidoreductase chain 3 (115 aa).

3 consecutive transmembrane segments (helical) span residues 3 to 23 (LMATLLTNTMLTSLMVLIAFW), 55 to 75 (FFLVAITFLLFDLEIALLLPL), and 86 to 106 (LTLLMSFMLIILLAIGLAYEW).

This sequence belongs to the complex I subunit 3 family. Core subunit of respiratory chain NADH dehydrogenase (Complex I) which is composed of 45 different subunits. Interacts with TMEM186. Interacts with TMEM242.

The protein localises to the mitochondrion inner membrane. It catalyses the reaction a ubiquinone + NADH + 5 H(+)(in) = a ubiquinol + NAD(+) + 4 H(+)(out). In terms of biological role, core subunit of the mitochondrial membrane respiratory chain NADH dehydrogenase (Complex I) which catalyzes electron transfer from NADH through the respiratory chain, using ubiquinone as an electron acceptor. Essential for the catalytic activity of complex I. The protein is NADH-ubiquinone oxidoreductase chain 3 of Mammuthus primigenius (Siberian woolly mammoth).